Reading from the N-terminus, the 277-residue chain is Carbonyl reductase [NADPH] 3 (277 aa).

At S2 the chain carries N-acetylserine. NADP(+)-binding positions include 10–34, 38–42, 63–64, and N90; these read VTGA…GDVV, RDEAR, and DI. Position 30 is a phosphoserine (S30). A substrate-binding site is contributed by S140. Y194 functions as the Proton acceptor in the catalytic mechanism. Residue 194 to 198 coordinates NADP(+); sequence YGVSK.

Belongs to the short-chain dehydrogenases/reductases (SDR) family.

The protein resides in the cytoplasm. The catalysed reaction is a secondary alcohol + NADP(+) = a ketone + NADPH + H(+). The enzyme catalyses a quinone + NADPH + H(+) = a quinol + NADP(+). In terms of biological role, catalyzes the NADPH-dependent reduction of carbonyl compounds to their corresponding alcohols. Has low NADPH-dependent oxidoreductase activity. Acts on several orthoquinones, as well as on non-quinone compounds, such as isatin or on the anticancer drug oracin. Best substrates for CBR3 is 1,2- naphthoquinone, hence could play a role in protection against cytotoxicity of exogenous quinones. Exerts activity toward ortho-quinones but not paraquinones. No endogenous substrate for CBR3 except isatin has been identified. In Mus musculus (Mouse), this protein is Carbonyl reductase [NADPH] 3 (Cbr3).